The following is a 1465-amino-acid chain: DNA polymerase III PolC-type (1465 aa).

In terms of domain architecture, Exonuclease spans 427–583; the sequence is YVVFDVETTG…YDAEATGRLL (157 aa).

It belongs to the DNA polymerase type-C family. PolC subfamily.

The protein localises to the cytoplasm. It carries out the reaction DNA(n) + a 2'-deoxyribonucleoside 5'-triphosphate = DNA(n+1) + diphosphate. Functionally, required for replicative DNA synthesis. This DNA polymerase also exhibits 3' to 5' exonuclease activity. The polypeptide is DNA polymerase III PolC-type (Streptococcus pyogenes serotype M18 (strain MGAS8232)).